Reading from the N-terminus, the 102-residue chain is Sulfur globule protein CV3 (102 aa).

Positions 1 to 25 are cleaved as a signal peptide; sequence MTMKRLLLVSTLAGASALATLPANA.

In terms of assembly, the protein envelope of the sulfur globules is composed of the three different proteins CV1, CV2 and CV3.

Functionally, structural protein of the sulfur globules, which are intracellular globules that serve for sulfur storage in purple sulfur bacteria. The polypeptide is Sulfur globule protein CV3 (sgpC) (Allochromatium vinosum (strain ATCC 17899 / DSM 180 / NBRC 103801 / NCIMB 10441 / D) (Chromatium vinosum)).